Here is a 1204-residue protein sequence, read N- to C-terminus: ATP-dependent helicase/nuclease subunit A (1204 aa).

Residues 2–469 (TKFTKEQNQA…IVLSDNFRST (468 aa)) form the UvrD-like helicase ATP-binding domain. 23-30 (ASAGSGKT) contributes to the ATP binding site. The UvrD-like helicase C-terminal domain maps to 496-784 (EGQLQFGATY…KLMTIHASKG (289 aa)).

This sequence belongs to the helicase family. AddA subfamily. Heterodimer of AddA and AddB/RexB. Requires Mg(2+) as cofactor.

It carries out the reaction Couples ATP hydrolysis with the unwinding of duplex DNA by translocating in the 3'-5' direction.. It catalyses the reaction ATP + H2O = ADP + phosphate + H(+). Its function is as follows. The heterodimer acts as both an ATP-dependent DNA helicase and an ATP-dependent, dual-direction single-stranded exonuclease. Recognizes the chi site generating a DNA molecule suitable for the initiation of homologous recombination. The AddA nuclease domain is required for chi fragment generation; this subunit has the helicase and 3' -&gt; 5' nuclease activities. The polypeptide is ATP-dependent helicase/nuclease subunit A (Lactobacillus johnsonii (strain CNCM I-12250 / La1 / NCC 533)).